The following is a 448-amino-acid chain: Trk system potassium uptake protein TrkA homolog 2 (448 aa).

Residues methionine 1–isoleucine 124 enclose the RCK N-terminal 1 domain. Residues glycine 7–valine 11, glutamate 29, threonine 70–glycine 71, and arginine 101 contribute to the NAD(+) site. Residues isoleucine 144–asparagine 225 form the RCK C-terminal 1 domain. Positions arginine 230–valine 348 constitute an RCK N-terminal 2 domain. An NAD(+)-binding site is contributed by arginine 232–tyrosine 262. Residues glutamate 368–lysine 448 form the RCK C-terminal 2 domain.

In terms of biological role, part of a potassium transport system. This is Trk system potassium uptake protein TrkA homolog 2 (trkA2) from Methanosarcina mazei (strain ATCC BAA-159 / DSM 3647 / Goe1 / Go1 / JCM 11833 / OCM 88) (Methanosarcina frisia).